Reading from the N-terminus, the 53-residue chain is Conotoxin Cal9.2f (53 aa).

Residues 1-6 (KKGVTL) constitute a propeptide that is removed on maturation. 3 disulfide bridges follow: C15/C32, C20/C42, and C22/C47.

Expressed by the venom duct.

The protein resides in the secreted. Its function is as follows. Probable neurotoxin with unknown target. Possibly targets ion channels. The polypeptide is Conotoxin Cal9.2f (Californiconus californicus (California cone)).